A 102-amino-acid polypeptide reads, in one-letter code: ATP-dependent Clp protease adapter protein ClpS (102 aa).

Belongs to the ClpS family. In terms of assembly, binds to the N-terminal domain of the chaperone ClpA.

Its function is as follows. Involved in the modulation of the specificity of the ClpAP-mediated ATP-dependent protein degradation. The polypeptide is ATP-dependent Clp protease adapter protein ClpS (Shewanella sediminis (strain HAW-EB3)).